The sequence spans 178 residues: Ribosome maturation factor RimM (178 aa).

The PRC barrel domain occupies 101 to 178 (DGEYYWYQLQ…EMKVEWDADF (78 aa)).

The protein belongs to the RimM family. Binds ribosomal protein uS19.

It localises to the cytoplasm. In terms of biological role, an accessory protein needed during the final step in the assembly of 30S ribosomal subunit, possibly for assembly of the head region. Essential for efficient processing of 16S rRNA. May be needed both before and after RbfA during the maturation of 16S rRNA. It has affinity for free ribosomal 30S subunits but not for 70S ribosomes. This Pseudomonas fluorescens (strain ATCC BAA-477 / NRRL B-23932 / Pf-5) protein is Ribosome maturation factor RimM.